The chain runs to 1328 residues: ABC transporter G family member 2 (1328 aa).

Residues 53–299 form the ABC transporter 1 domain; it reads VTARNLSMSI…FEGLGFKLPK (247 aa). 91 to 98 is an ATP binding site; the sequence is GSPGCGKT. The ABC transmembrane type-2 1 domain maps to 388-665; that stretch reads ISSQVAVRMR…FGMYFFLKNV (278 aa). 7 helical membrane-spanning segments follow: residues 398–418, 428–448, 477–497, 504–524, 534–554, 559–579, and 642–662; these read IIKS…LDLN, LIFF…AILF, IPIA…MCGL, FIYF…FFKM, LASV…GFMA, IGGW…FEGL, and IDLL…YFFL. Positions 670–691 are disordered; sequence RASDPKNDKRSKKASKRSKKIK. Residues 678–689 show a composition bias toward basic residues; it reads KRSKKASKRSKK. Residues 721–960 form the ABC transporter 2 domain; that stretch reads VYEVDVKKDG…DLLGYFENHG (240 aa). 755 to 762 contacts ATP; the sequence is GPSGAGKS. An ABC transmembrane type-2 2 domain is found at 1049-1286; it reads VRRVQNIRTR…PICPITNGNQ (238 aa). 6 consecutive transmembrane segments (helical) span residues 1059–1076, 1087–1107, 1128–1148, 1172–1192, 1197–1217, and 1303–1323; these read LMRS…FVRM, VSIL…SIPI, IYLF…AIIY, FISF…ATVL, IAHA…GFMI, and AVIF…LKFI.

The protein belongs to the ABC transporter superfamily. ABCG family. PDR (TC 3.A.1.205) subfamily.

The protein resides in the endosome membrane. Functionally, required for endocytosis and endosomal pH regulation. This is ABC transporter G family member 2 (abcG2) from Dictyostelium discoideum (Social amoeba).